Consider the following 274-residue polypeptide: THAP domain-containing protein 8 (274 aa).

The THAP-type zinc-finger motif lies at Met-1 to Phe-85. Positions Ser-83–Ala-121 are disordered.

This Homo sapiens (Human) protein is THAP domain-containing protein 8 (THAP8).